The chain runs to 542 residues: Apolipoprotein N-acyltransferase (542 aa).

Helical transmembrane passes span 26–46, 54–74, 89–109, 113–133, 163–183, and 187–207; these read ASVI…LSLV, IWCL…SWML, LLIS…VLCF, YWGA…VRYY, WAGQ…VLVF, and FSYG…GTYY. The CN hydrolase domain maps to 220–499; sequence LRVAIVQPGY…PDVLQVSVPV (280 aa). The active-site Proton acceptor is the Glu-264. Residue Lys-349 is part of the active site. The Nucleophile role is filled by Cys-404. Residues 509–529 form a helical membrane-spanning segment; the sequence is FGDAPLLFVAVSSVLGVVGYF.

The protein belongs to the CN hydrolase family. Apolipoprotein N-acyltransferase subfamily.

Its subcellular location is the cell inner membrane. It carries out the reaction N-terminal S-1,2-diacyl-sn-glyceryl-L-cysteinyl-[lipoprotein] + a glycerophospholipid = N-acyl-S-1,2-diacyl-sn-glyceryl-L-cysteinyl-[lipoprotein] + a 2-acyl-sn-glycero-3-phospholipid + H(+). It participates in protein modification; lipoprotein biosynthesis (N-acyl transfer). Its function is as follows. Catalyzes the phospholipid dependent N-acylation of the N-terminal cysteine of apolipoprotein, the last step in lipoprotein maturation. The polypeptide is Apolipoprotein N-acyltransferase (Chlamydia muridarum (strain MoPn / Nigg)).